A 443-amino-acid polypeptide reads, in one-letter code: Proline--tRNA ligase (443 aa).

It belongs to the class-II aminoacyl-tRNA synthetase family. ProS type 2 subfamily. Homodimer.

It is found in the cytoplasm. The enzyme catalyses tRNA(Pro) + L-proline + ATP = L-prolyl-tRNA(Pro) + AMP + diphosphate. Its function is as follows. Catalyzes the attachment of proline to tRNA(Pro) in a two-step reaction: proline is first activated by ATP to form Pro-AMP and then transferred to the acceptor end of tRNA(Pro). This is Proline--tRNA ligase from Caulobacter vibrioides (strain ATCC 19089 / CIP 103742 / CB 15) (Caulobacter crescentus).